Consider the following 280-residue polypeptide: Energy-coupling factor transporter ATP-binding protein EcfA1 (280 aa).

An ABC transporter domain is found at 6–241 (LRIENISFQY…SHMLQEIGLD (236 aa)). Residue 40-47 (GQNGSGKS) participates in ATP binding.

The protein belongs to the ABC transporter superfamily. Energy-coupling factor EcfA family. As to quaternary structure, forms a stable energy-coupling factor (ECF) transporter complex composed of 2 membrane-embedded substrate-binding proteins (S component), 2 ATP-binding proteins (A component) and 2 transmembrane proteins (T component).

It is found in the cell membrane. Its function is as follows. ATP-binding (A) component of a common energy-coupling factor (ECF) ABC-transporter complex. Unlike classic ABC transporters this ECF transporter provides the energy necessary to transport a number of different substrates. This chain is Energy-coupling factor transporter ATP-binding protein EcfA1, found in Bacillus cereus (strain ATCC 14579 / DSM 31 / CCUG 7414 / JCM 2152 / NBRC 15305 / NCIMB 9373 / NCTC 2599 / NRRL B-3711).